Consider the following 471-residue polypeptide: Argininosuccinate lyase (471 aa).

The protein belongs to the lyase 1 family. Argininosuccinate lyase subfamily.

Its subcellular location is the cytoplasm. The enzyme catalyses 2-(N(omega)-L-arginino)succinate = fumarate + L-arginine. Its pathway is amino-acid biosynthesis; L-arginine biosynthesis; L-arginine from L-ornithine and carbamoyl phosphate: step 3/3. The sequence is that of Argininosuccinate lyase from Deinococcus radiodurans (strain ATCC 13939 / DSM 20539 / JCM 16871 / CCUG 27074 / LMG 4051 / NBRC 15346 / NCIMB 9279 / VKM B-1422 / R1).